A 538-amino-acid polypeptide reads, in one-letter code: Phosphoenolpyruvate carboxykinase (ATP) (538 aa).

The substrate site is built by arginine 64, tyrosine 205, and lysine 211. Residues lysine 211, histidine 230, and glycine 246–threonine 254 contribute to the ATP site. Mn(2+) contacts are provided by lysine 211 and histidine 230. Residue aspartate 267 coordinates Mn(2+). Residues glutamate 295, arginine 331, arginine 447–isoleucine 448, and threonine 453 contribute to the ATP site. Arginine 331 lines the substrate pocket.

The protein belongs to the phosphoenolpyruvate carboxykinase (ATP) family. As to quaternary structure, monomer. It depends on Mn(2+) as a cofactor.

The protein resides in the cytoplasm. It carries out the reaction oxaloacetate + ATP = phosphoenolpyruvate + ADP + CO2. It functions in the pathway carbohydrate biosynthesis; gluconeogenesis. In terms of biological role, involved in the gluconeogenesis. Catalyzes the conversion of oxaloacetate (OAA) to phosphoenolpyruvate (PEP) through direct phosphoryl transfer between the nucleoside triphosphate and OAA. The protein is Phosphoenolpyruvate carboxykinase (ATP) of Haemophilus influenzae (strain PittEE).